A 141-amino-acid chain; its full sequence is Large ribosomal subunit protein uL11 (141 aa).

Belongs to the universal ribosomal protein uL11 family. As to quaternary structure, part of the ribosomal stalk of the 50S ribosomal subunit. Interacts with L10 and the large rRNA to form the base of the stalk. L10 forms an elongated spine to which L12 dimers bind in a sequential fashion forming a multimeric L10(L12)X complex. One or more lysine residues are methylated.

Functionally, forms part of the ribosomal stalk which helps the ribosome interact with GTP-bound translation factors. This is Large ribosomal subunit protein uL11 from Synechococcus sp. (strain JA-3-3Ab) (Cyanobacteria bacterium Yellowstone A-Prime).